The chain runs to 351 residues: DNA beta-glucosyltransferase (351 aa).

As to quaternary structure, monomer.

It catalyses the reaction Transfers a beta-D-glucosyl residue from UDP-alpha-D-glucose to a hydroxymethylcytosine residue in DNA.. The protein operates within genetic information processing; DNA modification. Its function is as follows. Catalyzes the transfer of glucose from uridine diphosphoglucose to 5-hydroxymethyl cytosine of T4 DNA to yield glucosyl 5-hydroxymethyl cytosine (glc-HMC). This DNA process seems to occur immediately after DNA synthesis since the DNA alpha-glucosyltransferase interacts with the clamp protein gp45. The glc-HMC modification protects the phage genome against its own nucleases and the host restriction endonuclease system. The glc-HMC modification also protects against the host CRISPR-Cas9 defense system. The protein is DNA beta-glucosyltransferase (bgt) of Enterobacteria phage T4 (Bacteriophage T4).